Here is a 285-residue protein sequence, read N- to C-terminus: 4-diphosphocytidyl-2-C-methyl-D-erythritol kinase (285 aa).

Residue lysine 11 is part of the active site. Residue 95–105 (PVAAGIGGGSA) coordinates ATP. Aspartate 137 is a catalytic residue.

It belongs to the GHMP kinase family. IspE subfamily.

It catalyses the reaction 4-CDP-2-C-methyl-D-erythritol + ATP = 4-CDP-2-C-methyl-D-erythritol 2-phosphate + ADP + H(+). It participates in isoprenoid biosynthesis; isopentenyl diphosphate biosynthesis via DXP pathway; isopentenyl diphosphate from 1-deoxy-D-xylulose 5-phosphate: step 3/6. In terms of biological role, catalyzes the phosphorylation of the position 2 hydroxy group of 4-diphosphocytidyl-2C-methyl-D-erythritol. The protein is 4-diphosphocytidyl-2-C-methyl-D-erythritol kinase of Paramagnetospirillum magneticum (strain ATCC 700264 / AMB-1) (Magnetospirillum magneticum).